The sequence spans 120 residues: U-scoloptoxin(16)-Er2a (120 aa).

An N-terminal signal peptide occupies residues 1–26 (MNTVSVVQFLAVGCAVFVLYGRGVFA).

It belongs to the scoloptoxin-16 family. Post-translationally, contains 4 disulfide bonds. As to expression, expressed by the venom gland.

It is found in the secreted. The protein is U-scoloptoxin(16)-Er2a of Ethmostigmus rubripes (Giant centipede).